Here is a 203-residue protein sequence, read N- to C-terminus: Recombination protein RecR (203 aa).

A C4-type zinc finger spans residues 56-71 (CAVCGNVSDDERCRIC). A Toprim domain is found at 79 to 179 (SVVCVVEEPK…TVTRIASGLP (101 aa)).

Belongs to the RecR family.

Functionally, may play a role in DNA repair. It seems to be involved in an RecBC-independent recombinational process of DNA repair. It may act with RecF and RecO. This is Recombination protein RecR from Mycobacterium avium (strain 104).